The chain runs to 299 residues: Oxygen-dependent coproporphyrinogen-III oxidase (299 aa).

Serine 92 provides a ligand contact to substrate. The a divalent metal cation site is built by histidine 96 and histidine 106. Catalysis depends on histidine 106, which acts as the Proton donor. 108 to 110 (NVR) serves as a coordination point for substrate. Positions 145 and 175 each coordinate a divalent metal cation. An important for dimerization region spans residues 240 to 275 (YVEFNLVWDRGTLFGLQTGGRTESILMSMPPLVRWE). 258–260 (GGR) serves as a coordination point for substrate.

This sequence belongs to the aerobic coproporphyrinogen-III oxidase family. As to quaternary structure, homodimer. Requires a divalent metal cation as cofactor.

Its subcellular location is the cytoplasm. It catalyses the reaction coproporphyrinogen III + O2 + 2 H(+) = protoporphyrinogen IX + 2 CO2 + 2 H2O. Its pathway is porphyrin-containing compound metabolism; protoporphyrin-IX biosynthesis; protoporphyrinogen-IX from coproporphyrinogen-III (O2 route): step 1/1. Functionally, involved in the heme biosynthesis. Catalyzes the aerobic oxidative decarboxylation of propionate groups of rings A and B of coproporphyrinogen-III to yield the vinyl groups in protoporphyrinogen-IX. The sequence is that of Oxygen-dependent coproporphyrinogen-III oxidase from Enterobacter sp. (strain 638).